The chain runs to 491 residues: Probable cytosol aminopeptidase (491 aa).

Residues K261 and D266 each coordinate Mn(2+). K273 is an active-site residue. D285, D344, and E346 together coordinate Mn(2+). R348 is an active-site residue.

This sequence belongs to the peptidase M17 family. Requires Mn(2+) as cofactor.

It localises to the cytoplasm. The enzyme catalyses Release of an N-terminal amino acid, Xaa-|-Yaa-, in which Xaa is preferably Leu, but may be other amino acids including Pro although not Arg or Lys, and Yaa may be Pro. Amino acid amides and methyl esters are also readily hydrolyzed, but rates on arylamides are exceedingly low.. The catalysed reaction is Release of an N-terminal amino acid, preferentially leucine, but not glutamic or aspartic acids.. Presumably involved in the processing and regular turnover of intracellular proteins. Catalyzes the removal of unsubstituted N-terminal amino acids from various peptides. This is Probable cytosol aminopeptidase from Picosynechococcus sp. (strain ATCC 27264 / PCC 7002 / PR-6) (Agmenellum quadruplicatum).